Reading from the N-terminus, the 348-residue chain is Outer membrane protein assembly factor BamC (348 aa).

The signal sequence occupies residues 1–19 (MKYSHQLVIGSLAVFVLTA). Cys20 carries N-palmitoyl cysteine lipidation. The S-diacylglycerol cysteine moiety is linked to residue Cys20.

The protein belongs to the BamC family. In terms of assembly, part of the Bam complex.

Its subcellular location is the cell outer membrane. Its function is as follows. Part of the outer membrane protein assembly complex, which is involved in assembly and insertion of beta-barrel proteins into the outer membrane. The polypeptide is Outer membrane protein assembly factor BamC (Vibrio atlanticus (strain LGP32) (Vibrio splendidus (strain Mel32))).